The following is a 538-amino-acid chain: Chaperonin GroEL (538 aa).

Residues 30–33 (TLGP), 87–91 (DGTTT), Gly-415, 479–481 (DAA), and Asp-495 each bind ATP.

Belongs to the chaperonin (HSP60) family. Forms a cylinder of 14 subunits composed of two heptameric rings stacked back-to-back. Interacts with the co-chaperonin GroES.

It localises to the cytoplasm. It carries out the reaction ATP + H2O + a folded polypeptide = ADP + phosphate + an unfolded polypeptide.. Functionally, together with its co-chaperonin GroES, plays an essential role in assisting protein folding. The GroEL-GroES system forms a nano-cage that allows encapsulation of the non-native substrate proteins and provides a physical environment optimized to promote and accelerate protein folding. This chain is Chaperonin GroEL, found in Dictyoglomus thermophilum (strain ATCC 35947 / DSM 3960 / H-6-12).